A 273-amino-acid chain; its full sequence is Shikimate dehydrogenase (NADP(+)) (273 aa).

Residues 15–17 and T62 each bind shikimate; that span reads SKS. K66 serves as the catalytic Proton acceptor. Position 78 (E78) interacts with NADP(+). Residues N87 and D103 each contribute to the shikimate site. NADP(+) contacts are provided by residues 127-131, 151-156, and M214; these read GAGGA and NRTHDK. Y216 is a binding site for shikimate. Position 238 (G238) interacts with NADP(+).

This sequence belongs to the shikimate dehydrogenase family. As to quaternary structure, homodimer.

The catalysed reaction is shikimate + NADP(+) = 3-dehydroshikimate + NADPH + H(+). Its pathway is metabolic intermediate biosynthesis; chorismate biosynthesis; chorismate from D-erythrose 4-phosphate and phosphoenolpyruvate: step 4/7. Involved in the biosynthesis of the chorismate, which leads to the biosynthesis of aromatic amino acids. Catalyzes the reversible NADPH linked reduction of 3-dehydroshikimate (DHSA) to yield shikimate (SA). The protein is Shikimate dehydrogenase (NADP(+)) of Shewanella denitrificans (strain OS217 / ATCC BAA-1090 / DSM 15013).